A 129-amino-acid polypeptide reads, in one-letter code: Translation initiation factor 5A (129 aa).

Lys-36 bears the Hypusine mark.

It belongs to the eIF-5A family.

It localises to the cytoplasm. Functionally, functions by promoting the formation of the first peptide bond. In Picrophilus torridus (strain ATCC 700027 / DSM 9790 / JCM 10055 / NBRC 100828 / KAW 2/3), this protein is Translation initiation factor 5A.